The chain runs to 175 residues: Protein-export protein SecB (175 aa).

Belongs to the SecB family. As to quaternary structure, homotetramer, a dimer of dimers. One homotetramer interacts with 1 SecA dimer.

Its subcellular location is the cytoplasm. Its function is as follows. One of the proteins required for the normal export of preproteins out of the cell cytoplasm. It is a molecular chaperone that binds to a subset of precursor proteins, maintaining them in a translocation-competent state. It also specifically binds to its receptor SecA. This is Protein-export protein SecB from Anaplasma marginale (strain Florida).